The sequence spans 1428 residues: DNA polymerase III PolC-type (1428 aa).

In terms of domain architecture, Exonuclease spans Phe-414 to Leu-570.

This sequence belongs to the DNA polymerase type-C family. PolC subfamily.

The protein resides in the cytoplasm. The enzyme catalyses DNA(n) + a 2'-deoxyribonucleoside 5'-triphosphate = DNA(n+1) + diphosphate. Functionally, required for replicative DNA synthesis. This DNA polymerase also exhibits 3' to 5' exonuclease activity. The chain is DNA polymerase III PolC-type from Oceanobacillus iheyensis (strain DSM 14371 / CIP 107618 / JCM 11309 / KCTC 3954 / HTE831).